Reading from the N-terminus, the 218-residue chain is Variable small protein 8 (218 aa).

Positions 1 to 18 (MRKRISAIIMTLFMVFMS) are cleaved as a signal peptide. The N-palmitoyl cysteine moiety is linked to residue Cys19. Cys19 is lipidated: S-diacylglycerol cysteine.

The protein belongs to the variable small protein (Vsp) family.

The protein resides in the cell outer membrane. The Vlp and Vsp proteins are antigenically distinct proteins, only one vlp or vsp gene is transcriptionally active at any one time. Switching between these genes is a mechanism of host immune response evasion. The chain is Variable small protein 8 from Borrelia hermsii.